Here is a 285-residue protein sequence, read N- to C-terminus: SLAM family member 8 (285 aa).

Positions 1–22 (MVMRPLWSLLLWEALLPITVTG) are cleaved as a signal peptide. Over 23-233 (AQVLSKVGGS…AAPGKASYKD (211 aa)) the chain is Extracellular. The N-linked (GlcNAc...) asparagine glycan is linked to N85. The Ig-like C2-type domain occupies 128 to 215 (PVVQVFIAVE…PVSWDLATVT (88 aa)). C152 and C201 form a disulfide bridge. The chain crosses the membrane as a helical span at residues 234-254 (VLLVVVPVSLLLMLVTLFSAW). Over 255–285 (HWCPCSGKKKKDVHADRVGPETENPLVQDLP) the chain is Cytoplasmic. The interval 262–285 (KKKKDVHADRVGPETENPLVQDLP) is disordered.

Expressed in lymph node, spleen, thymus and bone marrow.

It localises to the membrane. In terms of biological role, may play a role in B-lineage commitment and/or modulation of signaling through the B-cell receptor. This chain is SLAM family member 8 (SLAMF8), found in Homo sapiens (Human).